The following is a 416-amino-acid chain: Lipoyl synthase, mitochondrial (416 aa).

The transit peptide at 1-33 (MAAPTRSLRRLSSFRTTISPSLTVTAPIGCRSY) directs the protein to the mitochondrion. 7 residues coordinate [4Fe-4S] cluster: C132, C137, C143, C163, C167, C170, and S378. In terms of domain architecture, Radical SAM core spans 148 to 367 (DKSSATATIM…RQRALDMGFL (220 aa)). Residues 396–416 (GSGTAERTVDQTAATTDEATR) are disordered. Over residues 405–416 (DQTAATTDEATR) the composition is skewed to polar residues.

Belongs to the radical SAM superfamily. Lipoyl synthase family. It depends on [4Fe-4S] cluster as a cofactor.

The protein localises to the mitochondrion. The enzyme catalyses [[Fe-S] cluster scaffold protein carrying a second [4Fe-4S](2+) cluster] + N(6)-octanoyl-L-lysyl-[protein] + 2 oxidized [2Fe-2S]-[ferredoxin] + 2 S-adenosyl-L-methionine + 4 H(+) = [[Fe-S] cluster scaffold protein] + N(6)-[(R)-dihydrolipoyl]-L-lysyl-[protein] + 4 Fe(3+) + 2 hydrogen sulfide + 2 5'-deoxyadenosine + 2 L-methionine + 2 reduced [2Fe-2S]-[ferredoxin]. It functions in the pathway protein modification; protein lipoylation via endogenous pathway; protein N(6)-(lipoyl)lysine from octanoyl-[acyl-carrier-protein]: step 2/2. In terms of biological role, catalyzes the radical-mediated insertion of two sulfur atoms into the C-6 and C-8 positions of the octanoyl moiety bound to the lipoyl domains of lipoate-dependent enzymes, thereby converting the octanoylated domains into lipoylated derivatives. In Penicillium rubens (strain ATCC 28089 / DSM 1075 / NRRL 1951 / Wisconsin 54-1255) (Penicillium chrysogenum), this protein is Lipoyl synthase, mitochondrial.